Reading from the N-terminus, the 623-residue chain is AFI1-like protein C776.06c (623 aa).

Positions 5–204 (DYLLTAIFDP…IDNIPKPGSE (200 aa)) constitute a uDENN domain. The cDENN domain occupies 248 to 386 (ISNLINTFID…SDATTTMDTK (139 aa)). The 89-residue stretch at 388 to 476 (LFNNTSPFTP…WSWDNDDEKV (89 aa)) folds into the dDENN domain.

This sequence belongs to the AFI1/mesA family.

The protein localises to the cytoplasm. It is found in the cell cortex. Its subcellular location is the nucleus. Involved in polarity establishment. In Schizosaccharomyces pombe (strain 972 / ATCC 24843) (Fission yeast), this protein is AFI1-like protein C776.06c.